The chain runs to 481 residues: UDP-glycosyltransferase 72E2 (481 aa).

The active-site Proton acceptor is the His18. His18 lines the an anthocyanidin pocket. Asp111 acts as the Charge relay in catalysis. Residues Ala346, Gln348, His363, Trp366, Ser368, and Glu371 each contribute to the UDP-alpha-D-glucose site. Ala386 serves as a coordination point for an anthocyanidin. Positions 387 and 388 each coordinate UDP-alpha-D-glucose.

The protein belongs to the UDP-glycosyltransferase family. As to expression, expressed in seedlings and roots.

It carries out the reaction (E)-4-coumarate + UDP-alpha-D-glucose = 4-O-(beta-D-glucosyl)-trans-4-coumarate + UDP + H(+). The catalysed reaction is (E)-coniferol + UDP-alpha-D-glucose = 4-O-(beta-D-glucosyl)-(E)-coniferol + UDP + H(+). The enzyme catalyses (E)-sinapyl alcohol + UDP-alpha-D-glucose = 4-O-(beta-D-glucosyl)-trans-4-sinapoyl alcohol + UDP + H(+). It catalyses the reaction (E)-sinapate + UDP-alpha-D-glucose = 4-O-(beta-D-glucosyl)-trans-sinapate + UDP + H(+). It carries out the reaction (E)-coniferaldehyde + UDP-alpha-D-glucose = 4-O-(beta-D-glucosyl)-4-(E)-coniferyl aldehyde + UDP + H(+). The catalysed reaction is (E)-sinapaldehyde + UDP-alpha-D-glucose = 4-O-(beta-D-glucosyl)-4-trans-sinapoyl aldehyde + UDP + H(+). In terms of biological role, involved in the O-glucosylation of monolignols (alcohol monomers of lignin). Glucosylates coniferyl alcohol to form coniferyl alcohol 4-O-glucoside. Glucosylates sinapyl alcohol to form sinapyl alcohol 4-O-glucoside. Glucosylates coniferyl aldehyde to form coniferyl aldehyde 4-O-glucoside. Glucosylates sinapyl aldehyde to form sinapyl aldehyde 4-O-glucoside. Possesses low activity with sinapate and ferulate as substrates. In Arabidopsis thaliana (Mouse-ear cress), this protein is UDP-glycosyltransferase 72E2.